The primary structure comprises 502 residues: Glutamate--tRNA ligase (502 aa).

The 'HIGH' region motif lies at 21-31 (PSPTGVPHVGM). The 'KMSKS' region signature appears at 265 to 269 (KLSKR). Lys-268 provides a ligand contact to ATP.

This sequence belongs to the class-I aminoacyl-tRNA synthetase family. Glutamate--tRNA ligase type 1 subfamily. In terms of assembly, monomer.

The protein resides in the cytoplasm. The enzyme catalyses tRNA(Glu) + L-glutamate + ATP = L-glutamyl-tRNA(Glu) + AMP + diphosphate. Catalyzes the attachment of glutamate to tRNA(Glu) in a two-step reaction: glutamate is first activated by ATP to form Glu-AMP and then transferred to the acceptor end of tRNA(Glu). The polypeptide is Glutamate--tRNA ligase (Mycobacterium leprae (strain TN)).